The following is a 90-amino-acid chain: U7-theraphotoxin-Hhn1j (90 aa).

Positions 1–19 (MKTAIFTVVLALAVFAVLS) are cleaved as a signal peptide. Positions 20 to 50 (FGWEANEKALSEEFTELIHEKEAASETEARE) are excised as a propeptide. Disulfide bonds link C51–C65, C58–C70, and C64–C81.

Belongs to the neurotoxin 10 (Hwtx-1) family. 13 (Hntx-13) subfamily. In terms of tissue distribution, expressed by the venom gland.

It localises to the secreted. Functionally, ion channel inhibitor. In Cyriopagopus hainanus (Chinese bird spider), this protein is U7-theraphotoxin-Hhn1j.